A 212-amino-acid polypeptide reads, in one-letter code: MNSIDKTQRITQSDALPGRSTPMPVARLHVVHEHSMTHVPDHMSVAIFAMGCFWGAERLFWQQPGIYSTAAGYIGGYTPNPTYREVCSGQTDHAEAVRVVFDPATISYSQLLQLFWENHDPAQGMRQGGDIGSQYRSAIYTLTPEQEQAAQASLQRFQQAMRENSDGRAISTEIEPAGPFYYAEEDHQQYLHKNPNGYCGLGGIGVCLPPPR.

Positions 1–14 are enriched in polar residues; sequence MNSIDKTQRITQSD. The interval 1–21 is disordered; it reads MNSIDKTQRITQSDALPGRST. C52 is an active-site residue.

It belongs to the MsrA Met sulfoxide reductase family.

It carries out the reaction L-methionyl-[protein] + [thioredoxin]-disulfide + H2O = L-methionyl-(S)-S-oxide-[protein] + [thioredoxin]-dithiol. It catalyses the reaction [thioredoxin]-disulfide + L-methionine + H2O = L-methionine (S)-S-oxide + [thioredoxin]-dithiol. Its function is as follows. Has an important function as a repair enzyme for proteins that have been inactivated by oxidation. Catalyzes the reversible oxidation-reduction of methionine sulfoxide in proteins to methionine. This Pectobacterium atrosepticum (strain SCRI 1043 / ATCC BAA-672) (Erwinia carotovora subsp. atroseptica) protein is Peptide methionine sulfoxide reductase MsrA.